The chain runs to 273 residues: Dermonecrotic toxin LhSicTox-alphaIA1ii (273 aa).

H5 is an active-site residue. Residues E25 and D27 each contribute to the Mg(2+) site. The active-site Nucleophile is the H41. 2 disulfides stabilise this stretch: C45–C51 and C47–C190. Mg(2+) is bound at residue D85.

Belongs to the arthropod phospholipase D family. Class II subfamily. It depends on Mg(2+) as a cofactor. In terms of tissue distribution, expressed by the venom gland.

It localises to the secreted. It carries out the reaction an N-(acyl)-sphingosylphosphocholine = an N-(acyl)-sphingosyl-1,3-cyclic phosphate + choline. The enzyme catalyses an N-(acyl)-sphingosylphosphoethanolamine = an N-(acyl)-sphingosyl-1,3-cyclic phosphate + ethanolamine. It catalyses the reaction a 1-acyl-sn-glycero-3-phosphocholine = a 1-acyl-sn-glycero-2,3-cyclic phosphate + choline. The catalysed reaction is a 1-acyl-sn-glycero-3-phosphoethanolamine = a 1-acyl-sn-glycero-2,3-cyclic phosphate + ethanolamine. Dermonecrotic toxins cleave the phosphodiester linkage between the phosphate and headgroup of certain phospholipids (sphingolipid and lysolipid substrates), forming an alcohol (often choline) and a cyclic phosphate. This toxin acts on sphingomyelin (SM). It may also act on ceramide phosphoethanolamine (CPE), lysophosphatidylcholine (LPC) and lysophosphatidylethanolamine (LPE), but not on lysophosphatidylserine (LPS), and lysophosphatidylglycerol (LPG). It acts by transphosphatidylation, releasing exclusively cyclic phosphate products as second products. Induces dermonecrosis, hemolysis, increased vascular permeability, edema, inflammatory response, and platelet aggregation. The sequence is that of Dermonecrotic toxin LhSicTox-alphaIA1ii from Loxosceles hirsuta (Recluse spider).